The sequence spans 453 residues: Ribulose bisphosphate carboxylase large chain (453 aa).

The propeptide occupies 1 to 2 (MS). Residue P3 is modified to N-acetylproline. K14 carries the N6,N6,N6-trimethyllysine modification. Substrate is bound by residues N123 and T173. K175 acts as the Proton acceptor in catalysis. K177 is a substrate binding site. K201, D203, and E204 together coordinate Mg(2+). At K201 the chain carries N6-carboxylysine. Catalysis depends on H294, which acts as the Proton acceptor. R295, H327, and S379 together coordinate substrate.

This sequence belongs to the RuBisCO large chain family. Type I subfamily. Heterohexadecamer of 8 large chains and 8 small chains; disulfide-linked. The disulfide link is formed within the large subunit homodimers. Mg(2+) is required as a cofactor. In terms of processing, the disulfide bond which can form in the large chain dimeric partners within the hexadecamer appears to be associated with oxidative stress and protein turnover.

It is found in the plastid. The protein localises to the chloroplast. It catalyses the reaction 2 (2R)-3-phosphoglycerate + 2 H(+) = D-ribulose 1,5-bisphosphate + CO2 + H2O. It carries out the reaction D-ribulose 1,5-bisphosphate + O2 = 2-phosphoglycolate + (2R)-3-phosphoglycerate + 2 H(+). Its function is as follows. RuBisCO catalyzes two reactions: the carboxylation of D-ribulose 1,5-bisphosphate, the primary event in carbon dioxide fixation, as well as the oxidative fragmentation of the pentose substrate in the photorespiration process. Both reactions occur simultaneously and in competition at the same active site. The sequence is that of Ribulose bisphosphate carboxylase large chain from Valantia muralis (Wall valantia).